The following is a 347-amino-acid chain: Melanoma-associated antigen B10 (347 aa).

Residues 1–18 (MPRGQKSKLRAREKRRQA) show a composition bias toward basic residues. 2 disordered regions span residues 1 to 20 (MPRGQKSKLRAREKRRQARG) and 56 to 92 (GASNNPHGLREAQSTSTSATAASHTRHPEGVNDQMEE). Low complexity predominate over residues 67–78 (AQSTSTSATAAS). Residues 81–92 (RHPEGVNDQMEE) show a composition bias toward basic and acidic residues. Residues 111–310 (VDEKVIILVH…SEFSNWYTEA (200 aa)) enclose the MAGE domain. The interval 328 to 347 (VSATAGARSKVKSSKSSQLQ) is disordered.

This Homo sapiens (Human) protein is Melanoma-associated antigen B10 (MAGEB10).